The chain runs to 271 residues: Chymotrypsin-like elastase family member 2A (271 aa).

Residues 1–16 form the signal peptide; the sequence is MIRTLLLSALVAGALS. Positions 17 to 30 are cleaved as a propeptide — activation peptide; it reads CGYPTYEVEDDVSR. The 239-residue stretch at 31–269 folds into the Peptidase S1 domain; that stretch reads VVGGQEATPN…YIDWINSVMA (239 aa). Cysteine 60 and cysteine 76 are joined by a disulfide. Active-site charge relay system residues include histidine 75 and aspartate 123. 3 disulfides stabilise this stretch: cysteine 157–cysteine 224, cysteine 188–cysteine 204, and cysteine 214–cysteine 245. Residue serine 218 is the Charge relay system of the active site.

It belongs to the peptidase S1 family. Elastase subfamily. In terms of assembly, interacts with CPA1. Interacts with SERPINA1. In terms of tissue distribution, highly expressed in pancreas (at mRNA and protein levels). Also expressed in adrenal gland and small intestine.

It localises to the secreted. The catalysed reaction is Preferential cleavage: Leu-|-Xaa, Met-|-Xaa and Phe-|-Xaa. Hydrolyzes elastin.. Its function is as follows. Elastase that enhances insulin signaling and might have a physiologic role in cellular glucose metabolism. Circulates in plasma and reduces platelet hyperactivation, triggers both insulin secretion and degradation, and increases insulin sensitivity. The chain is Chymotrypsin-like elastase family member 2A from Mus musculus (Mouse).